The chain runs to 178 residues: Cytochrome b6-f complex iron-sulfur subunit (178 aa).

A helical transmembrane segment spans residues 20-42 (LLTFGSVTGVALGALYPVVNYFI). One can recognise a Rieske domain in the interval 65-161 (ATGWLSSHPE…VSVENDNVFV (97 aa)). Residues Cys107, His109, Cys125, and His128 each coordinate [2Fe-2S] cluster. Residues Cys112 and Cys127 are joined by a disulfide bond.

This sequence belongs to the Rieske iron-sulfur protein family. The 4 large subunits of the cytochrome b6-f complex are cytochrome b6, subunit IV (17 kDa polypeptide, PetD), cytochrome f and the Rieske protein, while the 4 small subunits are PetG, PetL, PetM and PetN. The complex functions as a dimer. It depends on [2Fe-2S] cluster as a cofactor.

The protein resides in the cellular thylakoid membrane. It catalyses the reaction 2 oxidized [plastocyanin] + a plastoquinol + 2 H(+)(in) = 2 reduced [plastocyanin] + a plastoquinone + 4 H(+)(out). In terms of biological role, component of the cytochrome b6-f complex, which mediates electron transfer between photosystem II (PSII) and photosystem I (PSI), cyclic electron flow around PSI, and state transitions. The sequence is that of Cytochrome b6-f complex iron-sulfur subunit from Parasynechococcus marenigrum (strain WH8102).